The chain runs to 264 residues: Tritrans,polycis-undecaprenyl-diphosphate synthase (geranylgeranyl-diphosphate specific) (264 aa).

The active site involves Asp43. Asp43 serves as a coordination point for Mg(2+). Substrate contacts are provided by residues Gly44–Arg47, Trp48, His60, and Ser88–Glu90. The active-site Proton acceptor is the Asn91. Residues Phe92, Arg94, Arg213, and Arg219–Ser221 contribute to the substrate site. Glu232 is a Mg(2+) binding site.

This sequence belongs to the UPP synthase family. In terms of assembly, homodimer. It depends on Mg(2+) as a cofactor.

The catalysed reaction is geranylgeranyl diphosphate + 7 isopentenyl diphosphate = tri-trans,hepta-cis-undecaprenyl diphosphate + 7 diphosphate. Its function is as follows. Catalyzes the sequential condensation of isopentenyl diphosphate (IPP) with geranylgeranyl diphosphate (GGPP) to yield (2Z,6Z,10Z,14Z,18Z,22Z,26Z,30E,34E,38E)-undecaprenyl diphosphate (tritrans,heptacis-UPP). It is probably the precursor of glycosyl carrier lipids. The protein is Tritrans,polycis-undecaprenyl-diphosphate synthase (geranylgeranyl-diphosphate specific) of Pyrococcus abyssi (strain GE5 / Orsay).